The sequence spans 129 residues: MARVKRALNAQKKRRTVLKASKGYRGQRSRLYRKAKEQQLHSLTYAYRDRRARKGEFRKLWISRINAAARANDITYNRLIQGLKAAGVEVDRKNLAELAVSDPAAFTALVDVARAALPEDVNAPSGEAA.

The protein belongs to the bacterial ribosomal protein bL20 family.

Binds directly to 23S ribosomal RNA and is necessary for the in vitro assembly process of the 50S ribosomal subunit. It is not involved in the protein synthesizing functions of that subunit. The sequence is that of Large ribosomal subunit protein bL20 from Mycolicibacterium smegmatis (strain ATCC 700084 / mc(2)155) (Mycobacterium smegmatis).